A 249-amino-acid polypeptide reads, in one-letter code: MLLIPAIDLKGGKCVRLRQGRMEDDTVFSDDPVAVALHWAEAGAKRLHLVDLDGAFAGQPVNADIIYHIAQALPDMDIQVGGGIRDSDTIQTYLDAGVRYAIIGTKAINAPHFVADACLEFPGHILLGLDAREGKIAINGWSKLSRHNLIDIAQRFEKDGVEAIIYTDIQRDGMMKGVNIEATSELAKAINIPVIASGGVSSLTEIEALCQHEQDGIGGAIIGRALYEEKIQLAEALAIAKRLSGESTA.

D8 (proton acceptor) is an active-site residue. The active-site Proton donor is D130.

It belongs to the HisA/HisF family.

It is found in the cytoplasm. It carries out the reaction 1-(5-phospho-beta-D-ribosyl)-5-[(5-phospho-beta-D-ribosylamino)methylideneamino]imidazole-4-carboxamide = 5-[(5-phospho-1-deoxy-D-ribulos-1-ylimino)methylamino]-1-(5-phospho-beta-D-ribosyl)imidazole-4-carboxamide. Its pathway is amino-acid biosynthesis; L-histidine biosynthesis; L-histidine from 5-phospho-alpha-D-ribose 1-diphosphate: step 4/9. This is 1-(5-phosphoribosyl)-5-[(5-phosphoribosylamino)methylideneamino] imidazole-4-carboxamide isomerase from Nitrosococcus oceani (strain ATCC 19707 / BCRC 17464 / JCM 30415 / NCIMB 11848 / C-107).